The primary structure comprises 292 residues: MSHLSQQRICSGENPFACKVCGKIFSHKSTLTEHEHFHNREKPFECNECGKAFSQKQYVIKHQNTHTGEKLLECNECGKSFSQKENLLTHQKIHTGEKPFECKDCGKAFIQKSNLIRHQRTHTGEKPFICKECGKTFSGKSNLTEHEKIHIGEKPFKCNECGTAFGQKKYLIKHQNIHTGEKPYECNECGKAFSQRTSLIVHVRIHSGDKPYECNVCGKAFSQSSSLTVHVRSHTGEKPYGCNECGKAFSQFSTLALHLRIHTGKKPYQCSECGKAFSQKSHHIRHQKIHTH.

10 C2H2-type zinc fingers span residues 16–38, 44–66, 72–94, 100–122, 128–150, 156–178, 184–206, 212–234, 240–262, and 268–290; these read FACK…EHFH, FECN…QNTH, LECN…QKIH, FECK…QRTH, FICK…EKIH, FKCN…QNIH, YECN…VRIH, YECN…VRSH, YGCN…LRIH, and YQCS…QKIH. Residues lysine 28, lysine 51, and lysine 56 each participate in a glycyl lysine isopeptide (Lys-Gly) (interchain with G-Cter in SUMO2) cross-link. Glycyl lysine isopeptide (Lys-Gly) (interchain with G-Cter in SUMO) cross-links involve residues lysine 157 and lysine 169. Lysine 173 is covalently cross-linked (Glycyl lysine isopeptide (Lys-Gly) (interchain with G-Cter in SUMO2)). An interaction with TERF2IP region spans residues 212–292; it reads YECNVCGKAF…HIRHQKIHTH (81 aa).

Belongs to the krueppel C2H2-type zinc-finger protein family. In terms of assembly, binds DNA. Interacts with SUMO conjugating enzyme UBC9/UBE2I. Interacts with the telomeric protein TERF2IP.

It is found in the nucleus. In Bos taurus (Bovine), this protein is Zinc finger protein OZF (ZNF146).